The following is a 576-amino-acid chain: Proline--tRNA ligase (576 aa).

This sequence belongs to the class-II aminoacyl-tRNA synthetase family. ProS type 1 subfamily. Homodimer.

It localises to the cytoplasm. The enzyme catalyses tRNA(Pro) + L-proline + ATP = L-prolyl-tRNA(Pro) + AMP + diphosphate. Catalyzes the attachment of proline to tRNA(Pro) in a two-step reaction: proline is first activated by ATP to form Pro-AMP and then transferred to the acceptor end of tRNA(Pro). As ProRS can inadvertently accommodate and process non-cognate amino acids such as alanine and cysteine, to avoid such errors it has two additional distinct editing activities against alanine. One activity is designated as 'pretransfer' editing and involves the tRNA(Pro)-independent hydrolysis of activated Ala-AMP. The other activity is designated 'posttransfer' editing and involves deacylation of mischarged Ala-tRNA(Pro). The misacylated Cys-tRNA(Pro) is not edited by ProRS. The polypeptide is Proline--tRNA ligase (Leptospira interrogans serogroup Icterohaemorrhagiae serovar copenhageni (strain Fiocruz L1-130)).